The chain runs to 585 residues: A-type ATP synthase subunit A (585 aa).

237 to 244 (GPFGSGKT) lines the ATP pocket.

The protein belongs to the ATPase alpha/beta chains family. As to quaternary structure, has multiple subunits with at least A(3), B(3), C, D, E, F, H, I and proteolipid K(x).

The protein localises to the cell membrane. The enzyme catalyses ATP + H2O + 4 H(+)(in) = ADP + phosphate + 5 H(+)(out). Component of the A-type ATP synthase that produces ATP from ADP in the presence of a proton gradient across the membrane. The A chain is the catalytic subunit. The polypeptide is A-type ATP synthase subunit A (Natronomonas pharaonis (strain ATCC 35678 / DSM 2160 / CIP 103997 / JCM 8858 / NBRC 14720 / NCIMB 2260 / Gabara) (Halobacterium pharaonis)).